Reading from the N-terminus, the 312-residue chain is Malate dehydrogenase (312 aa).

Residues 12–17 (GAGFTG) and Asp36 each bind NAD(+). Arg87 and Arg93 together coordinate substrate. Residues Asn100 and 123–125 (LTN) contribute to the NAD(+) site. A substrate-binding site is contributed by Asn125. Position 149 is a phosphoserine (Ser149). Arg156 contacts substrate. His180 (proton acceptor) is an active-site residue.

It belongs to the LDH/MDH superfamily. MDH type 3 family.

It catalyses the reaction (S)-malate + NAD(+) = oxaloacetate + NADH + H(+). Its function is as follows. Catalyzes the reversible oxidation of malate to oxaloacetate. The polypeptide is Malate dehydrogenase (Bacillus licheniformis (strain ATCC 14580 / DSM 13 / JCM 2505 / CCUG 7422 / NBRC 12200 / NCIMB 9375 / NCTC 10341 / NRRL NRS-1264 / Gibson 46)).